Consider the following 394-residue polypeptide: THAP domain-containing protein 5 (394 aa).

The THAP-type zinc-finger motif lies at 1–84; sequence MPRYCAAICC…LKQTAIPTIF (84 aa). The disordered stretch occupies residues 86–109; it reads LPEDNQEKDPSKKKSQKKKLKSEK. Residues 320 to 323 carry the HCFC1-binding motif (HBM) motif; sequence EHSY. A coiled-coil region spans residues 347–381; it reads LELQEQQTLGRLKSLEALIRQLKQENWLSEENVKI.

In terms of assembly, interacts with HTRA2; under apoptotic conditions. Interacts with ABRAXAS2. Cleaved by HTRA2 during apoptosis.

It is found in the nucleus. In terms of biological role, has sequence-specific DNA-binding activity and can function as transcriptional repressor (in vitro). May be a regulator of cell cycle: THAP5 overexpression in human cell lines causes cell cycle arrest at G2/M phase. This Bos taurus (Bovine) protein is THAP domain-containing protein 5 (THAP5).